A 330-amino-acid chain; its full sequence is Cyclin N-terminal domain-containing protein 1 (330 aa).

In terms of domain architecture, Cyclin N-terminal spans 27–178 (DALLHLAQQN…VLKSLNFRIN (152 aa)).

Interacts with PRR19; this interaction promotes crossover formation. Interacts with RFC3 and RFC4; these interactions facilitate crossover formation. Interacts with CDC34; this interaction regulates the cell-cycle progression.

Its subcellular location is the nucleus. The protein localises to the cytoplasm. The protein resides in the chromosome. Its function is as follows. Plays a role in the different steps of crossover formation during meiotic recombination. Participates in the crossover differentiation step of crossover-specific recombination intermediates through its interaction with PRR19. In addition, stimulates crossover formation through the interactions with RFC3 and RFC4 and simultaneously regulates cell-cycle progression through interactions with CDC34 and subsequent ubiquitination of WEE1. May also participates in an active deselection process that destabilizes or removes excess pre-CO intermediates. This Homo sapiens (Human) protein is Cyclin N-terminal domain-containing protein 1.